A 472-amino-acid chain; its full sequence is RNA pseudouridine synthase 6, chloroplastic (472 aa).

The transit peptide at 1–66 directs the protein to the chloroplast; sequence MASPALTGGY…TDSQNQTTLS (66 aa). The S4 RNA-binding domain maps to 101–208; sequence VLVSEFISKQ…SPRCYEIDWK (108 aa). Aspartate 261 is an active-site residue.

This sequence belongs to the pseudouridine synthase RluA family.

The protein localises to the plastid. It is found in the chloroplast. The catalysed reaction is a uridine in RNA = a pseudouridine in RNA. The chain is RNA pseudouridine synthase 6, chloroplastic from Arabidopsis thaliana (Mouse-ear cress).